Here is a 378-residue protein sequence, read N- to C-terminus: Sphingosine 1-phosphate receptor 3 (378 aa).

Residues 1 to 40 (MATALPPRLQPVRGNETLREHYQYVGKLAGRLKEASEGST) are Extracellular-facing. Residue N15 is glycosylated (N-linked (GlcNAc...) asparagine). The chain crosses the membrane as a helical span at residues 41-65 (LTTVLFLVICSFIVLENLMVLIAIW). Residues 66 to 72 (KNNKFHN) lie on the Cytoplasmic side of the membrane. The helical transmembrane segment at 73-101 (RMYFFIGNLALCDLLAGIAYKVNILMSGK) threads the bilayer. Topologically, residues 102–115 (KTFSLSPTVWFLRE) are extracellular. The chain crosses the membrane as a helical span at residues 116 to 134 (GSMFVALGASTCSLLAIAI). The Cytoplasmic portion of the chain corresponds to 135–153 (ERHLTMIKMRPYDANKRHR). The helical transmembrane segment at 154 to 179 (VFLLIGMCWLIAFTLGALPILGWNCL) threads the bilayer. The Extracellular portion of the chain corresponds to 180 to 195 (HNLPDCSTILPLYSKK). A helical membrane pass occupies residues 196–216 (YIAFCISIFTAILVTIVILYA). The Cytoplasmic portion of the chain corresponds to 217-243 (RIYFLVKSSSRKVANHNNSERSMALLR). Residues 244-265 (TVVIVVSVFIACWSPLFILFLI) traverse the membrane as a helical segment. Residues 266–281 (DVACRVQACPILFKAQ) lie on the Extracellular side of the membrane. Residues 282-302 (WFIVLAVLNSAMNPVIYTLAS) traverse the membrane as a helical segment. The Cytoplasmic portion of the chain corresponds to 303-378 (KEMRRAFFRL…AALQNGIFCN (76 aa)). Residue S326 is modified to Phosphoserine. The interval 327–357 (PIQPALDPSRSKSSSSNNSSHSPKVKEDLPH) is disordered. The segment covering 337-348 (SKSSSSNNSSHS) has biased composition (low complexity).

The protein belongs to the G-protein coupled receptor 1 family. As to expression, expressed in all tissues, but most abundantly in heart, placenta, kidney, and liver.

It is found in the cell membrane. Its function is as follows. Receptor for the lysosphingolipid sphingosine 1-phosphate (S1P). S1P is a bioactive lysophospholipid that elicits diverse physiological effect on most types of cells and tissues. When expressed in rat HTC4 hepatoma cells, is capable of mediating S1P-induced cell proliferation and suppression of apoptosis. The chain is Sphingosine 1-phosphate receptor 3 from Homo sapiens (Human).